The chain runs to 272 residues: NADPH-dependent 7-cyano-7-deazaguanine reductase (272 aa).

82-84 (IES) provides a ligand contact to substrate. 84 to 85 (SK) contributes to the NADPH binding site. The active-site Thioimide intermediate is cysteine 178. Aspartate 185 serves as the catalytic Proton donor. 217–218 (HE) lines the substrate pocket. Position 246-247 (246-247 (RG)) interacts with NADPH.

The protein belongs to the GTP cyclohydrolase I family. QueF type 2 subfamily. Homodimer.

Its subcellular location is the cytoplasm. It catalyses the reaction 7-aminomethyl-7-carbaguanine + 2 NADP(+) = 7-cyano-7-deazaguanine + 2 NADPH + 3 H(+). It participates in tRNA modification; tRNA-queuosine biosynthesis. Its function is as follows. Catalyzes the NADPH-dependent reduction of 7-cyano-7-deazaguanine (preQ0) to 7-aminomethyl-7-deazaguanine (preQ1). In Stenotrophomonas maltophilia (strain K279a), this protein is NADPH-dependent 7-cyano-7-deazaguanine reductase.